The chain runs to 255 residues: MSLTLERGAIAPLPVLQDNIIWIWSCGSEAVVVDPAVAEPVIEALQQKGLTLIAVLQTHHHADHIGGTPDLLRQWPDAAVIASGQDRGRIPFQTQPVAAGTRFTLLGVPVDVIDVRAHTSAHLAFFLPEGCSPGGHPPALFCGDTLFSGGCGRLFEGTPDDMHRALQTLATLPESTRIYCAHEYTEGNLRWAHALQPEDRAIKARLEDVIALRTQHKLTIPSTLAEEHRSNLFLRAQSAAELGRLRQLKDDWKGF.

Residues His-59, His-61, Asp-63, His-64, His-118, Asp-144, and His-182 each contribute to the Zn(2+) site.

Belongs to the metallo-beta-lactamase superfamily. Glyoxalase II family. In terms of assembly, monomer. Zn(2+) serves as cofactor.

The catalysed reaction is an S-(2-hydroxyacyl)glutathione + H2O = a 2-hydroxy carboxylate + glutathione + H(+). It functions in the pathway secondary metabolite metabolism; methylglyoxal degradation; (R)-lactate from methylglyoxal: step 2/2. Functionally, thiolesterase that catalyzes the hydrolysis of S-D-lactoyl-glutathione to form glutathione and D-lactic acid. The chain is Hydroxyacylglutathione hydrolase from Synechococcus sp. (strain WH7803).